A 45-amino-acid chain; its full sequence is DNA replication protein repEB (45 aa).

In terms of biological role, involved in T4 DNA replication. Important for the priming of leading strand DNA synthesis at oriE. Binds to ssDNA. The chain is DNA replication protein repEB (repEB) from Enterobacteria phage T4 (Bacteriophage T4).